Reading from the N-terminus, the 75-residue chain is MTKNFIVTLKKNTPDVEAKKFLDSVHHAGGSIVHEFDIIKGYTIKVPDVLHLNKLKEKHNDVIENVEEDKEVHTN.

Thr-74 carries the post-translational modification Phosphothreonine.

This sequence belongs to the protease inhibitor I9 family. In terms of assembly, part of the heterodimeric LMA1 complex together with the thioredoxin II/TRX2. LMA1 binds to the ATPase SEC18.

The protein localises to the cytoplasm. Its function is as follows. Cytosolic inhibitor of vacuolar proteinase B (yscB), probably regulating protease B activity during limited proteolysis. PBI2 is a component of the LMA1 complex, which is involved in the facilitation of vesicle fusion such as homotypic vacuole and ER-derived COPII vesicle fusion with the Golgi. The chain is Protease B inhibitor 2 (PBI2) from Saccharomyces cerevisiae (strain ATCC 204508 / S288c) (Baker's yeast).